Here is a 495-residue protein sequence, read N- to C-terminus: Cytochrome P450 monooxygenase BOA4 (495 aa).

A helical transmembrane segment spans residues 12–31 (LANSNTVIAGCIVFALYYLF). N115 is a glycosylation site (N-linked (GlcNAc...) asparagine). C439 is a binding site for heme.

Belongs to the cytochrome P450 family. Heme serves as cofactor.

It is found in the membrane. It functions in the pathway polyketide biosynthesis. Its function is as follows. Cytochrome P450 monooxygenase; part of the gene cluster A that mediates the biosynthesis of botcinic acid and its botcinin derivatives, acetate-derived polyketides that contribute to virulence when combined with the sesquiterpene botrydial. Botcinic acid and its derivatives have been shown to induce chlorosis and necrosis during host plant infection, but also have antifungal activities. Two polyketide synthases, BOA6 and BOA9, are involved in the biosynthesis of botcinins. BOA6 mediates the formation of the per-methylated tetraketide core by condensation of four units of malonyl-CoA with one unit of acetyl-CoA, which would be methylated in activated methylene groups to yield a bicyclic acid intermediate that could then either be converted to botrylactone derivatives or lose the starter acetate unit through a retro-Claisen type C-C bond cleavage to yield botcinin derivatives. The second polyketide synthase, BOA9, is probably required for the biosynthesis of the tetraketide side chain of botcinins. The methyltransferase (MT) domain within BOA6 is probably responsible for the incorporation of four methyl groups. The trans-enoyl reductase BOA5 might take over the enoyl reductase function of BOA6 that misses an ER domain. The monooxygenases BOA2, BOA3 and BOA4 might be involved in further hydroxylations at C4, C5 and C8, whereas BOA7, close to BOA9, could potentially be involved in the hydroxylation at C4 in the side chain of botcinins. The polypeptide is Cytochrome P450 monooxygenase BOA4 (Botryotinia fuckeliana (strain B05.10) (Noble rot fungus)).